A 149-amino-acid chain; its full sequence is Arginine regulator (149 aa).

It belongs to the ArgR family.

The protein resides in the cytoplasm. Its pathway is amino-acid degradation; L-arginine degradation via ADI pathway. Functionally, regulates the transcription of the arc operon, involved in arginine catabolism. This Bacillus cereus (strain ATCC 10987 / NRS 248) protein is Arginine regulator (argR1).